The primary structure comprises 147 residues: Protein-export protein SecB 2 (147 aa).

The protein belongs to the SecB family. As to quaternary structure, homotetramer, a dimer of dimers. One homotetramer interacts with 1 SecA dimer.

The protein resides in the cytoplasm. Its function is as follows. One of the proteins required for the normal export of preproteins out of the cell cytoplasm. It is a molecular chaperone that binds to a subset of precursor proteins, maintaining them in a translocation-competent state. It also specifically binds to its receptor SecA. In Francisella tularensis subsp. holarctica (strain FTNF002-00 / FTA), this protein is Protein-export protein SecB 2.